Here is a 218-residue protein sequence, read N- to C-terminus: Ribose-5-phosphate isomerase A (218 aa).

Residues Lys7, 28–31 (TGST), 81–84 (DGAD), and 94–97 (KGGG) contribute to the substrate site. Glu103 serves as the catalytic Proton acceptor. A substrate-binding site is contributed by Lys121.

It belongs to the ribose 5-phosphate isomerase family. In terms of assembly, homodimer.

It carries out the reaction aldehydo-D-ribose 5-phosphate = D-ribulose 5-phosphate. It participates in carbohydrate degradation; pentose phosphate pathway; D-ribose 5-phosphate from D-ribulose 5-phosphate (non-oxidative stage): step 1/1. Its function is as follows. Catalyzes the reversible conversion of ribose-5-phosphate to ribulose 5-phosphate. This chain is Ribose-5-phosphate isomerase A, found in Vibrio vulnificus (strain YJ016).